The following is a 190-amino-acid chain: Protein GrpE (190 aa).

The segment covering 1–10 (MKKHVTEEQK) has biased composition (basic and acidic residues). Residues 1 to 42 (MKKHVTEEQKTSAAPEAEQASPESSAAEAATPEERISRLEEQ) are disordered. Low complexity predominate over residues 12 to 30 (SAAPEAEQASPESSAAEAA). Basic and acidic residues predominate over residues 32–42 (PEERISRLEEQ).

This sequence belongs to the GrpE family. As to quaternary structure, homodimer.

The protein resides in the cytoplasm. Functionally, participates actively in the response to hyperosmotic and heat shock by preventing the aggregation of stress-denatured proteins, in association with DnaK and GrpE. It is the nucleotide exchange factor for DnaK and may function as a thermosensor. Unfolded proteins bind initially to DnaJ; upon interaction with the DnaJ-bound protein, DnaK hydrolyzes its bound ATP, resulting in the formation of a stable complex. GrpE releases ADP from DnaK; ATP binding to DnaK triggers the release of the substrate protein, thus completing the reaction cycle. Several rounds of ATP-dependent interactions between DnaJ, DnaK and GrpE are required for fully efficient folding. This Pelobacter propionicus (strain DSM 2379 / NBRC 103807 / OttBd1) protein is Protein GrpE.